A 397-amino-acid polypeptide reads, in one-letter code: Argininosuccinate synthase (397 aa).

ATP is bound at residue 9-17 (AYSGGLDTS). Tyrosine 85 contacts L-citrulline. Glycine 115 lines the ATP pocket. L-aspartate is bound by residues threonine 117, asparagine 121, and aspartate 122. An L-citrulline-binding site is contributed by asparagine 121. L-citrulline contacts are provided by arginine 125, serine 173, glutamate 258, and tyrosine 270.

This sequence belongs to the argininosuccinate synthase family. Type 1 subfamily. As to quaternary structure, homotetramer.

The protein resides in the cytoplasm. The catalysed reaction is L-citrulline + L-aspartate + ATP = 2-(N(omega)-L-arginino)succinate + AMP + diphosphate + H(+). It functions in the pathway amino-acid biosynthesis; L-arginine biosynthesis; L-arginine from L-ornithine and carbamoyl phosphate: step 2/3. The sequence is that of Argininosuccinate synthase from Streptococcus suis (strain 05ZYH33).